The sequence spans 600 residues: MNNRKEDMEITSHYRHLLRELNEQRQHGVLCDACVVVEGKVFKAHKNVLLGSSRYFKTLYCQVQKTSDQATVTHLDIVTAQGFKAIIDFMYSAHLALTSRNVIEVMSAASFLQMTDIVQACHDFIKAALDISIKSDASDELSEFEIGTPASNSTEALISAVMAGRSISPWLARRTSPANSSGDSAIASCHEGGSSYGKEDQEPKADGPDDVSSQSLWPGDVGYGSLRIKEEQISPSHYGGSELPSSKDTAIQNSLSEQGSGDGWQPTGRRKNRKNKETVRHITQQVEEDSQAGSPVPSFLPTSGWPFSSRDSNVDLTVTEASSLDSRGERAELYAHIDEGLLGGETSYLGPPLTPEKEEALHQATAVANLRAALMSKNSLLSLKADVLGDDGSLLFEYLPKGAHSLSLNEFTVIRKKFKCPYCSFSAMHQCILKRHMRSHTGERPYPCEICGKKFTRREHMKRHTLVHSKDKKYVCKVCSRVFMSAASVGIKHGSRRHGVCADCAGRGVGTPLDHGGGGEGSPEALFAGEGPYLEDPDDPRGEAEEELVEDEDEDVAKWKDDVGLAHEDALLGDDKDDEDSPQGPHSPSGEPDKDFAWIS.

In terms of domain architecture, BTB spans 31-99 (CDACVVVEGK…MYSAHLALTS (69 aa)). The segment at 173–222 (RRTSPANSSGDSAIASCHEGGSSYGKEDQEPKADGPDDVSSQSLWPGDVG) is disordered. Residues 197 to 207 (GKEDQEPKADG) are compositionally biased toward basic and acidic residues. A Glycyl lysine isopeptide (Lys-Gly) (interchain with G-Cter in SUMO2) cross-link involves residue Lys229. At Ser234 the chain carries Phosphoserine. The interval 235 to 278 (PSHYGGSELPSSKDTAIQNSLSEQGSGDGWQPTGRRKNRKNKET) is disordered. Polar residues predominate over residues 243–259 (LPSSKDTAIQNSLSEQG). C2H2-type zinc fingers lie at residues 418 to 436 (FKCP…LKRH) and 446 to 468 (YPCE…TLVH). Residues 513–600 (LDHGGGGEGS…EPDKDFAWIS (88 aa)) are disordered. The segment covering 533-555 (YLEDPDDPRGEAEEELVEDEDED) has biased composition (acidic residues). Basic and acidic residues-rich tracts occupy residues 556-574 (VAKW…LLGD) and 591-600 (EPDKDFAWIS).

Sumoylated. Desumoylation by DESI1 reverses transcriptional repression activity.

Its subcellular location is the nucleus. Functionally, functions as a transcriptional repressor for PRDM1. This Mus musculus (Mouse) protein is Zinc finger and BTB domain-containing protein 46 (Zbtb46).